The chain runs to 257 residues: MTAAVFFGCAFIAFGPALALYVFTIATDPLRVIFLIAGAFFWLVSLLLSSVFWFLVRVITDNRDGPVQNYLLIFGVLLSVCIQELFRLAYYKLLKKASEGLKSINPEETAPSMRLLAYVSGLGFGIMSGVFSFVNTLSNSLGPGTVGIHGDSPQFFLNSAFMTLVVIMLHVFWGVVFFDGCEKNKWYTLLTVLLTHLVVSTQTFLSPYYEVNLVTAYIIMVLMGIWAFYVAGGSCRSLKLCLLCQDKDFLLYNQRSR.

7 helical membrane-spanning segments follow: residues 5–25 (VFFGCAFIAFGPALALYVFTI), 32–52 (VIFLIAGAFFWLVSLLLSSVF), 66–86 (PVQNYLLIFGVLLSVCIQELF), 115–135 (LLAYVSGLGFGIMSGVFSFVN), 160–180 (AFMTLVVIMLHVFWGVVFFDG), 186–206 (WYTLLTVLLTHLVVSTQTFLS), and 213–233 (LVTAYIIMVLMGIWAFYVAGG).

The protein belongs to the APH-1 family. In terms of assembly, probable component of the gamma-secretase complex, a complex composed of a presenilin homodimer (PSEN1 or PSEN2), nicastrin (NCSTN), APH1 (APH1A or APH1B) and PEN2. Such minimal complex is sufficient for secretase activity, although other components may exist. Interacts with PSEN1 and PSEN2.

It is found in the membrane. In terms of biological role, probable subunit of the gamma-secretase complex, an endoprotease complex that catalyzes the intramembrane cleavage of integral proteins such as Notch receptors and APP (amyloid-beta precursor protein). It probably represents a stabilizing cofactor for the presenilin homodimer that promotes the formation of a stable complex. Probably present in a minority of gamma-secretase complexes compared to APH1A. The chain is Gamma-secretase subunit APH-1B (Aph1b) from Mus musculus (Mouse).